The primary structure comprises 177 residues: Large ribosomal subunit protein uL6 (177 aa).

The protein belongs to the universal ribosomal protein uL6 family. In terms of assembly, part of the 50S ribosomal subunit.

Functionally, this protein binds to the 23S rRNA, and is important in its secondary structure. It is located near the subunit interface in the base of the L7/L12 stalk, and near the tRNA binding site of the peptidyltransferase center. The protein is Large ribosomal subunit protein uL6 of Paramagnetospirillum magneticum (strain ATCC 700264 / AMB-1) (Magnetospirillum magneticum).